A 370-amino-acid chain; its full sequence is Anhydro-N-acetylmuramic acid kinase (370 aa).

12-19 contributes to the ATP binding site; the sequence is GTSLDGVD.

It belongs to the anhydro-N-acetylmuramic acid kinase family.

The catalysed reaction is 1,6-anhydro-N-acetyl-beta-muramate + ATP + H2O = N-acetyl-D-muramate 6-phosphate + ADP + H(+). Its pathway is amino-sugar metabolism; 1,6-anhydro-N-acetylmuramate degradation. The protein operates within cell wall biogenesis; peptidoglycan recycling. In terms of biological role, catalyzes the specific phosphorylation of 1,6-anhydro-N-acetylmuramic acid (anhMurNAc) with the simultaneous cleavage of the 1,6-anhydro ring, generating MurNAc-6-P. Is required for the utilization of anhMurNAc either imported from the medium or derived from its own cell wall murein, and thus plays a role in cell wall recycling. This is Anhydro-N-acetylmuramic acid kinase from Pectobacterium carotovorum subsp. carotovorum (strain PC1).